The following is a 72-amino-acid chain: MATRDSGGGQQHTNRHADEVEEVAAEGNDASDLKERHEKLSEDVDSLLDEIDDVLEENAEEFVKGYVQKGGE.

Residues 1–10 (MATRDSGGGQ) are compositionally biased toward gly residues. The interval 1 to 41 (MATRDSGGGQQHTNRHADEVEEVAAEGNDASDLKERHEKLS) is disordered. The stretch at 21–61 (EEVAAEGNDASDLKERHEKLSEDVDSLLDEIDDVLEENAEE) forms a coiled coil. Residues 28 to 66 (NDASDLKERHEKLSEDVDSLLDEIDDVLEENAEEFVKGY) are ARC ATPase binding. The span at 31–41 (SDLKERHEKLS) shows a compositional bias: basic and acidic residues. Glu72 is covalently cross-linked (Isoglutamyl lysine isopeptide (Glu-Lys) (interchain with K-? in acceptor proteins)).

It belongs to the prokaryotic ubiquitin-like protein family. As to quaternary structure, strongly interacts with the proteasome-associated ATPase ARC through a hydrophobic interface; the interacting region of Pup lies in its C-terminal half. There is one Pup binding site per ARC hexamer ring.

It participates in protein degradation; proteasomal Pup-dependent pathway. Protein modifier that is covalently attached to lysine residues of substrate proteins, thereby targeting them for proteasomal degradation. The tagging system is termed pupylation. This is Prokaryotic ubiquitin-like protein Pup from Frankia alni (strain DSM 45986 / CECT 9034 / ACN14a).